The sequence spans 185 residues: Peptidyl-tRNA hydrolase (185 aa).

Residue Y14 participates in tRNA binding. The active-site Proton acceptor is the H19. Y64, N66, and N112 together coordinate tRNA.

This sequence belongs to the PTH family. As to quaternary structure, monomer.

The protein resides in the cytoplasm. It catalyses the reaction an N-acyl-L-alpha-aminoacyl-tRNA + H2O = an N-acyl-L-amino acid + a tRNA + H(+). In terms of biological role, hydrolyzes ribosome-free peptidyl-tRNAs (with 1 or more amino acids incorporated), which drop off the ribosome during protein synthesis, or as a result of ribosome stalling. Its function is as follows. Catalyzes the release of premature peptidyl moieties from peptidyl-tRNA molecules trapped in stalled 50S ribosomal subunits, and thus maintains levels of free tRNAs and 50S ribosomes. This is Peptidyl-tRNA hydrolase from Ligilactobacillus salivarius (strain UCC118) (Lactobacillus salivarius).